The chain runs to 451 residues: MGNLLGGVSFREPTTVEDCDSTWQTDSEPEPEEPGPGGGSEGPGQESEQPAQPPEQAGGRPGASPAPDEDAEAAGAEQGGDSTEATAKPKRSFYAARDLYKYRHQYPNFKDIRYQNDLSNLRFYKNKIPFKPDGVYIEEVLSKWKGDYEKLEHNHTYIQWLFPLREQGLNFYAKELTTYEIEEFKKTKEAIRRFLLAYKMMLEFFGIKLTDKTGNVARAVNWQERFQHLNESQHNYLRITRILKSLGELGYESFKSPLVKFILHEALVENTIPNIKQSALEYFVYTIRDRRERRKLLRFAQKHYTPSENFIWGPPRKEQSEGSKAQKMSSPLASSHNSQTSMHKKAKDSKNSSSAVHLNSKTAEDKKVAPKEPVEETDRPSPEPSNEAAKPRNTEKDSNAENMNSQPEKTVTTPTEKKESVSPENNEEGGNDNQDNENPGNTNCHDVVLVQ.

Disordered stretches follow at residues Met1–Pro89 and Glu308–Gln451. Positions Pro43–Ala66 are enriched in low complexity. Residues Gly322 to Ser341 show a composition bias toward polar residues. Composition is skewed to basic and acidic residues over residues Thr362–Ser381 and Ala389–Asn399. Residues Asn431–Asn443 show a composition bias toward low complexity.

The protein belongs to the opioid growth factor receptor family. In terms of tissue distribution, ubiquitous.

The polypeptide is Opioid growth factor receptor-like protein 1 (OGFRL1) (Homo sapiens (Human)).